The chain runs to 435 residues: Cyclin-dependent kinase 14 (435 aa).

Residues 75–92 (RTQSSFDPFEKTSNQPTS) show a composition bias toward polar residues. The tract at residues 75-97 (RTQSSFDPFEKTSNQPTSPKFGK) is disordered. Residues 101 to 385 (YEKLEKLGEG…AQAALNHDYF (285 aa)) form the Protein kinase domain. ATP is bound by residues 107–115 (LGEGSYATV) and K130. D222 (proton acceptor) is an active-site residue.

It belongs to the protein kinase superfamily. CMGC Ser/Thr protein kinase family. CDC2/CDKX subfamily. In terms of assembly, interacts with ccny; ccny mediates its recruitment to the plasma membrane and promotes phosphorylation of lrp6.

It localises to the cell membrane. The enzyme catalyses L-seryl-[protein] + ATP = O-phospho-L-seryl-[protein] + ADP + H(+). It catalyses the reaction L-threonyl-[protein] + ATP = O-phospho-L-threonyl-[protein] + ADP + H(+). Serine/threonine-protein kinase involved in the control of the eukaryotic cell cycle, whose activity is controlled by an associated cyclin. Acts as a cell-cycle regulator of Wnt signaling pathway during G2/M phase by mediating the phosphorylation of lrp6, leading to the activation of the Wnt signaling pathway. In Xenopus laevis (African clawed frog), this protein is Cyclin-dependent kinase 14 (cdk14).